The following is a 157-amino-acid chain: Class-10 pathogenesis-related protein 1 (157 aa).

Belongs to the BetVI family. In terms of tissue distribution, high levels in roots and not detectable in hypocotyls, cotyledons, stems, leaves and flower buds of untreated plants. After induction, high levels are present in the vascular bundles of leaves.

It localises to the cytoplasm. This is Class-10 pathogenesis-related protein 1 (MSPR10-1) from Medicago sativa (Alfalfa).